Consider the following 151-residue polypeptide: Ribosome maturation factor RimP (151 aa).

Belongs to the RimP family.

The protein resides in the cytoplasm. Its function is as follows. Required for maturation of 30S ribosomal subunits. The sequence is that of Ribosome maturation factor RimP from Colwellia psychrerythraea (strain 34H / ATCC BAA-681) (Vibrio psychroerythus).